The chain runs to 78 residues: CDC42 small effector protein 1 (78 aa).

S-palmitoyl cysteine attachment occurs at residues cysteine 10 and cysteine 11. Residues 30-43 form the CRIB domain; that stretch reads IGEPMNFVHLTHIG.

It belongs to the CDC42SE/SPEC family.

It localises to the cytoplasm. The protein resides in the cytoskeleton. The protein localises to the cell membrane. Functionally, probably involved in the organization of the actin cytoskeleton by acting downstream of CDC42, inducing actin filament assembly. The polypeptide is CDC42 small effector protein 1 (CDC42SE1) (Gallus gallus (Chicken)).